Here is a 248-residue protein sequence, read N- to C-terminus: Isopentenyl phosphate kinase (248 aa).

7–11 (KLGGS) lines the ATP pocket. Gly-49 serves as a coordination point for substrate. Gly-50 serves as a coordination point for ATP. 2 residues coordinate substrate: His-54 and Gly-152. Positions 209 and 213 each coordinate ATP.

It belongs to the isopentenyl phosphate kinase family. Homodimer.

The catalysed reaction is isopentenyl phosphate + ATP = isopentenyl diphosphate + ADP. Its function is as follows. Catalyzes the phosphorylation of isopentenyl phosphate (IP) to isopentenyl diphosphate (IPP). Functions in an alternate mevalonate (MVA) pathway leading to IPP, a key precursor for the biosynthesis of isoprenoid compounds such as archaeal membrane lipids. The protein is Isopentenyl phosphate kinase of Haloferax volcanii (strain ATCC 29605 / DSM 3757 / JCM 8879 / NBRC 14742 / NCIMB 2012 / VKM B-1768 / DS2) (Halobacterium volcanii).